Here is a 413-residue protein sequence, read N- to C-terminus: 2,3-bisphosphoglycerate-independent phosphoglycerate mutase (413 aa).

Belongs to the BPG-independent phosphoglycerate mutase family. A-PGAM subfamily.

The enzyme catalyses (2R)-2-phosphoglycerate = (2R)-3-phosphoglycerate. Its pathway is carbohydrate degradation; glycolysis; pyruvate from D-glyceraldehyde 3-phosphate: step 3/5. In terms of biological role, catalyzes the interconversion of 2-phosphoglycerate and 3-phosphoglycerate. The protein is 2,3-bisphosphoglycerate-independent phosphoglycerate mutase of Sulfolobus acidocaldarius (strain ATCC 33909 / DSM 639 / JCM 8929 / NBRC 15157 / NCIMB 11770).